Reading from the N-terminus, the 452-residue chain is NADH-quinone oxidoreductase subunit H (452 aa).

The next 9 helical transmembrane spans lie at Ile-28 to Ile-48, Val-96 to Ile-116, Leu-136 to Leu-156, Val-177 to Thr-197, Ile-210 to Glu-230, Ala-264 to Ala-286, Trp-301 to Val-321, Lys-335 to Ile-355, and Tyr-366 to Trp-386.

The protein belongs to the complex I subunit 1 family. NDH-1 is composed of 14 different subunits. Subunits NuoA, H, J, K, L, M, N constitute the membrane sector of the complex.

The protein localises to the cell membrane. It carries out the reaction a quinone + NADH + 5 H(+)(in) = a quinol + NAD(+) + 4 H(+)(out). Its function is as follows. NDH-1 shuttles electrons from NADH, via FMN and iron-sulfur (Fe-S) centers, to quinones in the respiratory chain. The immediate electron acceptor for the enzyme in this species is believed to be ubiquinone. Couples the redox reaction to proton translocation (for every two electrons transferred, four hydrogen ions are translocated across the cytoplasmic membrane), and thus conserves the redox energy in a proton gradient. This subunit may bind ubiquinone. In Thermobifida fusca (strain YX), this protein is NADH-quinone oxidoreductase subunit H.